The chain runs to 198 residues: Remorin (198 aa).

A compositionally biased stretch (basic and acidic residues) spans Met1–Ile11. Residues Met1 to Ala24 form a disordered region. A coiled-coil region spans residues Glu97–Tyr184.

This sequence belongs to the remorin family. Post-translationally, the N-terminus is blocked. In terms of processing, phosphorylated.

Its subcellular location is the cell membrane. Binds to both simple and complex galacturonides. May be involved in cell-to-cell signaling and molecular transport. This Solanum tuberosum (Potato) protein is Remorin.